A 424-amino-acid polypeptide reads, in one-letter code: Tyrosine--tRNA ligase (424 aa).

Tyr-37 is an L-tyrosine binding site. The 'HIGH' region motif lies at 42 to 51; sequence PTADSLHLGH. Tyr-175 and Gln-179 together coordinate L-tyrosine. The 'KMSKS' region motif lies at 235-239; the sequence is KFGKT. Lys-238 contributes to the ATP binding site. The S4 RNA-binding domain maps to 357-414; that stretch reads ADLQQALVNAELVPSRGQARTMIGSNAVTINGEKQSNAEYNFSDADRLFGRYTLLRRG.

This sequence belongs to the class-I aminoacyl-tRNA synthetase family. TyrS type 1 subfamily. Homodimer.

Its subcellular location is the cytoplasm. It catalyses the reaction tRNA(Tyr) + L-tyrosine + ATP = L-tyrosyl-tRNA(Tyr) + AMP + diphosphate + H(+). Catalyzes the attachment of tyrosine to tRNA(Tyr) in a two-step reaction: tyrosine is first activated by ATP to form Tyr-AMP and then transferred to the acceptor end of tRNA(Tyr). In Serratia proteamaculans (strain 568), this protein is Tyrosine--tRNA ligase.